Reading from the N-terminus, the 176-residue chain is MIHAILKMGDPRLLRVAAPVERYDTPELRALIDDMFETMAHAQGVGLAAPQIGVDLQLVIFGFERNDRYPDAPAVPRTILCNPVIEPLSDEMEDGWEGCLSVPGLRGLVPRYRHIRYSGYDPAGQRIEREAEGFHARVVQHECDHLIGRLYPTRIRDLTKFGYTEVLFPEMDPNAD.

Cys-99 and His-141 together coordinate Fe cation. Glu-142 is an active-site residue. His-145 serves as a coordination point for Fe cation.

The protein belongs to the polypeptide deformylase family. Fe(2+) is required as a cofactor.

It carries out the reaction N-terminal N-formyl-L-methionyl-[peptide] + H2O = N-terminal L-methionyl-[peptide] + formate. Its function is as follows. Removes the formyl group from the N-terminal Met of newly synthesized proteins. Requires at least a dipeptide for an efficient rate of reaction. N-terminal L-methionine is a prerequisite for activity but the enzyme has broad specificity at other positions. The sequence is that of Peptide deformylase 1 from Bordetella pertussis (strain Tohama I / ATCC BAA-589 / NCTC 13251).